Here is a 538-residue protein sequence, read N- to C-terminus: Putative outer membrane porin BglH (538 aa).

An N-terminal signal peptide occupies residues 1–25; it reads MFRRNLITSAILLMAPLAFSAQSLA. Residues 52–82 form a disordered region; sequence KDEEKKKYTPATVNRSVSTNDQGYAANPFPT. The span at 62 to 73 shows a compositional bias: polar residues; the sequence is ATVNRSVSTNDQ.

Belongs to the porin LamB (TC 1.B.3) family.

It localises to the cell outer membrane. May be a sugar porin with a broad carbohydrate specificity. The sequence is that of Putative outer membrane porin BglH (bglH) from Escherichia coli O139:H28 (strain E24377A / ETEC).